The sequence spans 354 residues: Uptake hydrogenase small subunit (354 aa).

Positions 1 to 44 form a signal peptide, tat-type signal; sequence MSQLETXYDVMRRQGITRRSFLKYCSLTGRPCLGPTFAPQIAHA. Residues Cys61, Cys64, Cys156, Cys190, His228, Ser231, Cys256, and Cys262 each contribute to the [4Fe-4S] cluster site. [3Fe-4S] cluster-binding residues include Cys271, Cys290, and Cys293.

The protein belongs to the [NiFe]/[NiFeSe] hydrogenase small subunit family. As to quaternary structure, heterodimer of a large and a small subunit. It depends on [4Fe-4S] cluster as a cofactor. [3Fe-4S] cluster serves as cofactor. In terms of processing, predicted to be exported by the Tat system. The position of the signal peptide cleavage has not been experimentally proven.

The protein resides in the cell membrane. The catalysed reaction is H2 + A = AH2. This enzyme recycles the H(2) produced by nitrogenase to increase the production of ATP and to protect nitrogenase against inhibition or damage by O(2) under carbon- or phosphate-limited conditions. The protein is Uptake hydrogenase small subunit (hupA) of Azotobacter chroococcum mcd 1.